Reading from the N-terminus, the 793-residue chain is Cation channel sperm-associated auxiliary subunit delta (793 aa).

Residues 1–20 (MLMLMLVAAVTMWLRPLVTA) form the signal peptide. Topologically, residues 21–725 (QPLCRARTVR…AFPVQLVSAG (705 aa)) are extracellular. Disulfide bonds link Cys-24–Cys-370, Cys-60–Cys-146, Cys-145–Cys-153, Cys-388–Cys-497, Cys-511–Cys-703, Cys-526–Cys-573, and Cys-625–Cys-653. N-linked (GlcNAc...) asparagine glycosylation is present at Asn-128. Residues Asn-231, Asn-241, Asn-473, Asn-539, and Asn-631 are each glycosylated (N-linked (GlcNAc...) asparagine). The chain crosses the membrane as a helical span at residues 726–747 (VVMVLLISSILGSVWLAYMIPR). Topologically, residues 748–793 (LLRTARGRRMTSFVAQLYGRCKTVCQFRASATARTGSKPMGRHRSS) are cytoplasmic.

The protein belongs to the CATSPERD family. As to quaternary structure, component of the CatSper complex or CatSpermasome composed of the core pore-forming members CATSPER1, CATSPER2, CATSPER3 and CATSPER4 as well as auxiliary members CATSPERB, CATSPERG, CATSPERD, CATSPERE, CATSPERZ, C2CD6/CATSPERT, TMEM249, TMEM262 and EFCAB9. HSPA1 may be an additional auxiliary complex member. The core complex members CATSPER1, CATSPER2, CATSPER3 and CATSPER4 form a heterotetrameric channel. The auxiliary CATSPERB, CATSPERG, CATSPERD and CATSPERE subunits form a pavilion-like structure over the pore which stabilizes the complex through interactions with CATSPER4, CATSPER3, CATSPER1 and CATSPER2 respectively. TMEM262/CATSPERH interacts with CATSPERB, further stabilizing the complex. C2CD6/CATSPERT interacts at least with CATSPERD and is required for targeting the CatSper complex in the flagellar membrane.

The protein localises to the cell projection. It localises to the cilium. Its subcellular location is the flagellum membrane. Its function is as follows. Auxiliary component of the CatSper complex, a complex involved in sperm cell hyperactivation. Sperm cell hyperactivation is needed for sperm motility which is essential late in the preparation of sperm for fertilization. Required for CATSPER1 stability before intraflagellar transport and/or incorporation of the CatSper complex channel into the flagellar membrane. The polypeptide is Cation channel sperm-associated auxiliary subunit delta (Macaca fascicularis (Crab-eating macaque)).